A 638-amino-acid polypeptide reads, in one-letter code: Cytoplasmic dynein 1 intermediate chain 2 (638 aa).

2 stretches are compositionally biased toward basic and acidic residues: residues 1 to 13 and 20 to 43; these read MSDK…ELER and QIRE…KKEA. Disordered stretches follow at residues 1–135 and 155–214; these read MSDK…GRGP and TYTK…EEKQ. Ser-2 carries the post-translational modification N-acetylserine. Ser-51 carries the post-translational modification Diphosphoserine. Phosphoserine occurs at positions 51, 73, 81, 84, and 90. The span at 88 to 97 shows a compositional bias: low complexity; the sequence is PSSKSVSTPS. Thr-95 carries the phosphothreonine modification. Ser-97, Ser-101, and Ser-104 each carry phosphoserine. Residues 190 to 214 show a composition bias toward basic and acidic residues; sequence EKTLKKDEENDSKAPPHELTEEEKQ. WD repeat units follow at residues 277-326, 330-370, 379-420, 429-469, 474-519, 522-562, and 568-607; these read SKHR…TTPE, HCQS…RTPV, AHTH…HPQD, SKAV…AGIS, GHQG…PLYS, DNAD…EVPT, and EGNP…AVPR.

This sequence belongs to the dynein intermediate chain family. In terms of assembly, homodimer. The cytoplasmic dynein 1 complex consists of two catalytic heavy chains (HCs) and a number of non-catalytic subunits presented by intermediate chains (ICs), light intermediate chains (LICs) and light chains (LCs); the composition seems to vary in respect to the IC, LIC and LC composition. The heavy chain homodimer serves as a scaffold for the probable homodimeric assembly of the respective non-catalytic subunits. The ICs and LICs bind directly to the HC dimer and the LCs assemble on the IC dimer. Interacts with DYNLT3. Interacts with DYNLT1. Interacts (dephosphorylated at Ser-90) with DCTN1. Interacts with BICD2. Interacts with SPEF2. Interacts with CFAP61. (Microbial infection) Interacts with human adenovirus 5 hexon protein; this interaction probably allows virus intracellular transport. The phosphorylation status of Ser-90 appears to be involved in dynactin-dependent target binding. Post-translationally, pyrophosphorylation by 5-diphosphoinositol pentakisphosphate (5-IP7) promotes interaction with DCTN1. Serine pyrophosphorylation is achieved by Mg(2+)-dependent, but enzyme independent transfer of a beta-phosphate from a inositol pyrophosphate to a pre-phosphorylated serine residue.

It is found in the cytoplasm. It localises to the cytoskeleton. Its function is as follows. Acts as one of several non-catalytic accessory components of the cytoplasmic dynein 1 complex that are thought to be involved in linking dynein to cargos and to adapter proteins that regulate dynein function. Cytoplasmic dynein 1 acts as a motor for the intracellular retrograde motility of vesicles and organelles along microtubules. The intermediate chains mediate the binding of dynein to dynactin via its 150 kDa component (p150-glued) DCTN1. Involved in membrane-transport, such as Golgi apparatus, late endosomes and lysosomes. The chain is Cytoplasmic dynein 1 intermediate chain 2 from Homo sapiens (Human).